A 414-amino-acid chain; its full sequence is Serine/threonine transporter SstT (414 aa).

8 consecutive transmembrane segments (helical) span residues 16 to 36, 46 to 66, 84 to 104, 143 to 163, 180 to 200, 219 to 239, 300 to 320, and 332 to 352; these read GSLVKQILVGLVLGILLAWIS, LGTLFVGALKAVAPVLVLMLV, ILFLYLLGTFSAALAAVVFSF, ALLNANYIGILVWAVGLGFAL, AVTFMVKLVIRFAPVGIFGLV, LVVLIGCMLLVALMVNPLLVF, MAGAAITITVLTLAAVHTLGV, and VVASLCACGASGVAGGSLLLI.

The protein belongs to the dicarboxylate/amino acid:cation symporter (DAACS) (TC 2.A.23) family.

It is found in the cell inner membrane. It catalyses the reaction L-serine(in) + Na(+)(in) = L-serine(out) + Na(+)(out). The catalysed reaction is L-threonine(in) + Na(+)(in) = L-threonine(out) + Na(+)(out). Functionally, involved in the import of serine and threonine into the cell, with the concomitant import of sodium (symport system). In Salmonella heidelberg (strain SL476), this protein is Serine/threonine transporter SstT.